The chain runs to 225 residues: Fibronectin type III domain-containing protein 10 (225 aa).

Positions 1-19 are cleaved as a signal peptide; it reads MRAPPLLLLLAACAPPSGA. Residues 20–181 are Extracellular-facing; the sequence is AVDPTPPGWE…FTAEPAAMQE (162 aa). The Fibronectin type-III domain maps to 72-167; that stretch reads LASAGGSLRA…ELAAAPPELA (96 aa). N-linked (GlcNAc...) asparagine glycans are attached at residues asparagine 86 and asparagine 109. Residues 182-202 form a helical membrane-spanning segment; that stretch reads IVVAMTAVGGSICVMLVVICL. The Cytoplasmic segment spans residues 203–225; sequence LVAYITENLMHPTFRRPSLRRQP.

Its subcellular location is the membrane. This is Fibronectin type III domain-containing protein 10 (Fndc10) from Rattus norvegicus (Rat).